Consider the following 235-residue polypeptide: Leucyl/phenylalanyl-tRNA--protein transferase (235 aa).

It belongs to the L/F-transferase family.

It is found in the cytoplasm. The catalysed reaction is N-terminal L-lysyl-[protein] + L-leucyl-tRNA(Leu) = N-terminal L-leucyl-L-lysyl-[protein] + tRNA(Leu) + H(+). The enzyme catalyses N-terminal L-arginyl-[protein] + L-leucyl-tRNA(Leu) = N-terminal L-leucyl-L-arginyl-[protein] + tRNA(Leu) + H(+). It carries out the reaction L-phenylalanyl-tRNA(Phe) + an N-terminal L-alpha-aminoacyl-[protein] = an N-terminal L-phenylalanyl-L-alpha-aminoacyl-[protein] + tRNA(Phe). Its function is as follows. Functions in the N-end rule pathway of protein degradation where it conjugates Leu, Phe and, less efficiently, Met from aminoacyl-tRNAs to the N-termini of proteins containing an N-terminal arginine or lysine. The protein is Leucyl/phenylalanyl-tRNA--protein transferase of Aeromonas hydrophila subsp. hydrophila (strain ATCC 7966 / DSM 30187 / BCRC 13018 / CCUG 14551 / JCM 1027 / KCTC 2358 / NCIMB 9240 / NCTC 8049).